Consider the following 468-residue polypeptide: 6-phospho-beta-galactosidase (468 aa).

Residues Gln19, His116, Asn159, Glu160, and Asn297 each coordinate D-galactose 6-phosphate. Glu160 acts as the Proton donor in catalysis. Glu375 (nucleophile) is an active-site residue. The D-galactose 6-phosphate site is built by Ser428, Trp429, Lys435, and Tyr437.

The protein belongs to the glycosyl hydrolase 1 family.

The enzyme catalyses a 6-phospho-beta-D-galactoside + H2O = D-galactose 6-phosphate + an alcohol. It functions in the pathway carbohydrate metabolism; lactose degradation; D-galactose 6-phosphate and beta-D-glucose from lactose 6-phosphate: step 1/1. The polypeptide is 6-phospho-beta-galactosidase (Streptococcus mutans serotype c (strain ATCC 700610 / UA159)).